A 413-amino-acid polypeptide reads, in one-letter code: Palmitoyltransferase ZDHHC6 (413 aa).

Topologically, residues 1-24 are cytoplasmic; the sequence is MGTFCSVIKFENLQELKRLCHWGP. The chain crosses the membrane as a helical span at residues 25 to 45; the sequence is IIALGVIAICSTMAMIDSVLW. Over 46–57 the chain is Lumenal; it reads YWPLHTTGGSVN. Residues 58–78 form a helical membrane-spanning segment; the sequence is FIMLINWTVMILYNYFNAMFV. Residues 79-143 are Cytoplasmic-facing; it reads GPGFVPLGWK…NCCGYQNHAS (65 aa). One can recognise a DHHC domain in the interval 99 to 149; the sequence is QYCKVCQAYKAPRSHHCRKCNRCVMKMDHHCPWINNCCGYQNHASFTLFLL. The active-site S-palmitoyl cysteine intermediate is Cys-129. A helical membrane pass occupies residues 144–164; it reads FTLFLLLAPLGCIHAAFIFVM. The Lumenal portion of the chain corresponds to 165–205; that stretch reads TMYTQLYHRLSFGWNTVKIDMSAARRDPLPIVPFGLAAFAT. The chain crosses the membrane as a helical span at residues 206 to 226; sequence TLFALGLALGTTIAVGMLFFI. Residues 227–413 lie on the Cytoplasmic side of the membrane; it reads QMKIILRNKT…QAPEGEKKNR (187 aa). The SH3 domain occupies 313 to 398; that stretch reads VRSVRYKVIE…PRKCVEKCPC (86 aa). 3 S-palmitoyl cysteine lipidation sites follow: Cys-328, Cys-329, and Cys-343. A Di-lysine motif motif is present at residues 410–413; the sequence is KKNR.

The protein belongs to the DHHC palmitoyltransferase family. As to quaternary structure, homooligomerizes. Interacts with SELENOK. Palmitoylated at 3 different sites by ZDHHC16. The combination of the different palmitoylation events strongly affects the quaternary assembly of ZDHHC6, its localization, stability and function. Palmitoylation at Cys-328 accelerates the turnover of ZDHHC6. Depalmitoylated by LYPLA2.

It localises to the endoplasmic reticulum membrane. The enzyme catalyses L-cysteinyl-[protein] + hexadecanoyl-CoA = S-hexadecanoyl-L-cysteinyl-[protein] + CoA. The catalysed reaction is L-cysteinyl-[protein] + octadecanoyl-CoA = S-octadecanoyl-L-cysteinyl-[protein] + CoA. In terms of biological role, endoplasmic reticulum palmitoyl acyltransferase that mediates palmitoylation of proteins such as AMFR, CALX, ITPR1 and TFRC. Palmitoylates calnexin (CALX), which is required for its association with the ribosome-translocon complex and efficient folding of glycosylated proteins. Mediates palmitoylation of AMFR, promoting AMFR distribution to the peripheral endoplasmic reticulum. Together with SELENOK, palmitoylates ITPR1 in immune cells, leading to regulate ITPR1 stability and function. Stearoyltransferase that mediates stearoylation of TFRC to inhibit TFRC-mediated activation of the JNK pathway and mitochondrial fragmentation. The chain is Palmitoyltransferase ZDHHC6 from Homo sapiens (Human).